The following is a 673-amino-acid chain: DNA ligase (673 aa).

Residues 38–42 (DSVYD), 87–88 (SL), and Glu119 contribute to the NAD(+) site. Lys121 serves as the catalytic N6-AMP-lysine intermediate. NAD(+)-binding residues include Arg142, Glu179, Lys296, and Lys320. 4 residues coordinate Zn(2+): Cys414, Cys417, Cys432, and Cys438. Positions 595–673 (VVKSEIAGKT…EEAFLKLLKS (79 aa)) constitute a BRCT domain.

Belongs to the NAD-dependent DNA ligase family. LigA subfamily. Mg(2+) serves as cofactor. The cofactor is Mn(2+).

It carries out the reaction NAD(+) + (deoxyribonucleotide)n-3'-hydroxyl + 5'-phospho-(deoxyribonucleotide)m = (deoxyribonucleotide)n+m + AMP + beta-nicotinamide D-nucleotide.. Its function is as follows. DNA ligase that catalyzes the formation of phosphodiester linkages between 5'-phosphoryl and 3'-hydroxyl groups in double-stranded DNA using NAD as a coenzyme and as the energy source for the reaction. It is essential for DNA replication and repair of damaged DNA. This Coxiella burnetii (strain CbuK_Q154) (Coxiella burnetii (strain Q154)) protein is DNA ligase.